Here is a 244-residue protein sequence, read N- to C-terminus: NAD(P)H-quinone oxidoreductase subunit K (244 aa).

[4Fe-4S] cluster is bound by residues Cys-51, Cys-52, Cys-116, and Cys-147.

It belongs to the complex I 20 kDa subunit family. NDH-1 can be composed of about 15 different subunits; different subcomplexes with different compositions have been identified which probably have different functions. The cofactor is [4Fe-4S] cluster.

The protein localises to the cellular thylakoid membrane. It catalyses the reaction a plastoquinone + NADH + (n+1) H(+)(in) = a plastoquinol + NAD(+) + n H(+)(out). It carries out the reaction a plastoquinone + NADPH + (n+1) H(+)(in) = a plastoquinol + NADP(+) + n H(+)(out). NDH-1 shuttles electrons from an unknown electron donor, via FMN and iron-sulfur (Fe-S) centers, to quinones in the respiratory and/or the photosynthetic chain. The immediate electron acceptor for the enzyme in this species is believed to be plastoquinone. Couples the redox reaction to proton translocation, and thus conserves the redox energy in a proton gradient. Cyanobacterial NDH-1 also plays a role in inorganic carbon-concentration. In Synechococcus sp. (strain JA-2-3B'a(2-13)) (Cyanobacteria bacterium Yellowstone B-Prime), this protein is NAD(P)H-quinone oxidoreductase subunit K.